A 206-amino-acid chain; its full sequence is Cytidylate kinase (206 aa).

7-15 (GVAASGKSS) contributes to the ATP binding site.

It belongs to the cytidylate kinase family. Type 1 subfamily.

The protein resides in the cytoplasm. It carries out the reaction CMP + ATP = CDP + ADP. It catalyses the reaction dCMP + ATP = dCDP + ADP. This chain is Cytidylate kinase, found in Deinococcus radiodurans (strain ATCC 13939 / DSM 20539 / JCM 16871 / CCUG 27074 / LMG 4051 / NBRC 15346 / NCIMB 9279 / VKM B-1422 / R1).